The chain runs to 608 residues: UvrABC system protein C (608 aa).

The GIY-YIG domain maps to 13-91; sequence HDPGVYRMFD…IKTFQPRYNV (79 aa). The UVR domain maps to 201 to 236; it reads QQVLDHLIAKMETASRALDFENAARFRDQIQAVRAV.

It belongs to the UvrC family. In terms of assembly, interacts with UvrB in an incision complex.

Its subcellular location is the cytoplasm. Its function is as follows. The UvrABC repair system catalyzes the recognition and processing of DNA lesions. UvrC both incises the 5' and 3' sides of the lesion. The N-terminal half is responsible for the 3' incision and the C-terminal half is responsible for the 5' incision. The polypeptide is UvrABC system protein C (Actinobacillus succinogenes (strain ATCC 55618 / DSM 22257 / CCUG 43843 / 130Z)).